Here is a 252-residue protein sequence, read N- to C-terminus: Imidazole glycerol phosphate synthase subunit HisF (252 aa).

Catalysis depends on residues D11 and D130.

Belongs to the HisA/HisF family. Heterodimer of HisH and HisF.

It localises to the cytoplasm. The catalysed reaction is 5-[(5-phospho-1-deoxy-D-ribulos-1-ylimino)methylamino]-1-(5-phospho-beta-D-ribosyl)imidazole-4-carboxamide + L-glutamine = D-erythro-1-(imidazol-4-yl)glycerol 3-phosphate + 5-amino-1-(5-phospho-beta-D-ribosyl)imidazole-4-carboxamide + L-glutamate + H(+). Its pathway is amino-acid biosynthesis; L-histidine biosynthesis; L-histidine from 5-phospho-alpha-D-ribose 1-diphosphate: step 5/9. Functionally, IGPS catalyzes the conversion of PRFAR and glutamine to IGP, AICAR and glutamate. The HisF subunit catalyzes the cyclization activity that produces IGP and AICAR from PRFAR using the ammonia provided by the HisH subunit. The polypeptide is Imidazole glycerol phosphate synthase subunit HisF (Polynucleobacter asymbioticus (strain DSM 18221 / CIP 109841 / QLW-P1DMWA-1) (Polynucleobacter necessarius subsp. asymbioticus)).